The following is a 239-amino-acid chain: Proteasome subunit beta type-6 (239 aa).

A2 carries the post-translational modification N-acetylalanine. Positions 2–34 (AATLLAARGAGPAPAWGPEAFTPDWESREVSTG) are cleaved as a propeptide — removed in mature form. T35 acts as the Nucleophile in catalysis. T69 is subject to Phosphothreonine.

It belongs to the peptidase T1B family. As to quaternary structure, the 26S proteasome consists of a 20S proteasome core and two 19S regulatory subunits. The 20S proteasome core is a barrel-shaped complex made of 28 subunits that are arranged in four stacked rings. The two outer rings are each formed by seven alpha subunits, and the two inner rings are formed by seven beta subunits. The proteolytic activity is exerted by three beta-subunits PSMB5, PSMB6 and PSMB7. In terms of assembly, (Microbial infection) Interacts with HIV-1 protein Tat.

Its subcellular location is the cytoplasm. The protein localises to the nucleus. The catalysed reaction is Cleavage of peptide bonds with very broad specificity.. In terms of biological role, component of the 20S core proteasome complex involved in the proteolytic degradation of most intracellular proteins. This complex plays numerous essential roles within the cell by associating with different regulatory particles. Associated with two 19S regulatory particles, forms the 26S proteasome and thus participates in the ATP-dependent degradation of ubiquitinated proteins. The 26S proteasome plays a key role in the maintenance of protein homeostasis by removing misfolded or damaged proteins that could impair cellular functions, and by removing proteins whose functions are no longer required. Associated with the PA200 or PA28, the 20S proteasome mediates ubiquitin-independent protein degradation. This type of proteolysis is required in several pathways including spermatogenesis (20S-PA200 complex) or generation of a subset of MHC class I-presented antigenic peptides (20S-PA28 complex). Within the 20S core complex, PSMB6 displays a peptidylglutamyl-hydrolizing activity also termed postacidic or caspase-like activity, meaning that the peptides bond hydrolysis occurs directly after acidic residues. This is Proteasome subunit beta type-6 from Homo sapiens (Human).